Reading from the N-terminus, the 209-residue chain is Octanoyltransferase (209 aa).

Positions Asn-28 to Leu-203 constitute a BPL/LPL catalytic domain. Substrate-binding positions include Arg-66–His-73, Ala-133–Gly-135, and Gly-146–Ala-148. Cys-164 acts as the Acyl-thioester intermediate in catalysis.

The protein belongs to the LipB family.

It localises to the cytoplasm. The enzyme catalyses octanoyl-[ACP] + L-lysyl-[protein] = N(6)-octanoyl-L-lysyl-[protein] + holo-[ACP] + H(+). Its pathway is protein modification; protein lipoylation via endogenous pathway; protein N(6)-(lipoyl)lysine from octanoyl-[acyl-carrier-protein]: step 1/2. In terms of biological role, catalyzes the transfer of endogenously produced octanoic acid from octanoyl-acyl-carrier-protein onto the lipoyl domains of lipoate-dependent enzymes. Lipoyl-ACP can also act as a substrate although octanoyl-ACP is likely to be the physiological substrate. The protein is Octanoyltransferase of Pelobacter propionicus (strain DSM 2379 / NBRC 103807 / OttBd1).